Consider the following 385-residue polypeptide: NADH-quinone oxidoreductase subunit D 2 (385 aa).

It belongs to the complex I 49 kDa subunit family. As to quaternary structure, NDH-1 is composed of 14 different subunits. Subunits NuoB, C, D, E, F, and G constitute the peripheral sector of the complex.

It is found in the cell membrane. It catalyses the reaction a quinone + NADH + 5 H(+)(in) = a quinol + NAD(+) + 4 H(+)(out). Functionally, NDH-1 shuttles electrons from NADH, via FMN and iron-sulfur (Fe-S) centers, to quinones in the respiratory chain. The immediate electron acceptor for the enzyme in this species is believed to be a menaquinone. Couples the redox reaction to proton translocation (for every two electrons transferred, four hydrogen ions are translocated across the cytoplasmic membrane), and thus conserves the redox energy in a proton gradient. The protein is NADH-quinone oxidoreductase subunit D 2 of Salinispora arenicola (strain CNS-205).